The primary structure comprises 153 residues: T cell receptor delta constant (153 aa).

N-linked (GlcNAc...) asparagine glycosylation is present at Asn-14. Cys-20 and Cys-71 are disulfide-bonded. N-linked (GlcNAc...) asparagine glycosylation occurs at Asn-77. The segment covering 85 to 102 (FEVKTDSTDHVKPKETEN) has biased composition (basic and acidic residues). Positions 85-112 (FEVKTDSTDHVKPKETENTKQPSKSCHK) are disordered. A helical membrane pass occupies residues 130-152 (LGLRMLFAKTVAVNFLLTAKLFF).

As to quaternary structure, gamma-delta TR is a heterodimer composed of a gamma and delta chain; disulfide-linked. The gamma-delta TR is associated with the transmembrane signaling CD3 coreceptor proteins following the stoichiometry: a single gamma-delta TR heterodimer associates with one CD3D-CD3E heterodimer, one CD3G-CD3E heterodimer and one CD247 homodimer forming a stable octameric structure. Upon activation, gamma-delta TR complex associates with FCER1G to initiate intracellular signaling.

Its subcellular location is the cell membrane. Constant region of T cell receptor (TR) delta chain that participates in the antigen recognition. Gamma-delta TRs recognize a variety of self and foreign non-peptide antigens frequently expressed at the epithelial boundaries between the host and external environment, including endogenous lipids presented by MH-like protein CD1D and phosphoantigens presented by butyrophilin-like molecule BTN3A1. Upon antigen recognition induces rapid, innate-like immune responses involved in pathogen clearance and tissue repair. Binding of gamma-delta TR complex to antigen triggers phosphorylation of immunoreceptor tyrosine-based activation motifs (ITAMs) in the CD3 chains by the LCK and FYN kinases, allowing the recruitment, phosphorylation, and activation of ZAP70 that facilitates phosphorylation of the scaffolding proteins LCP2 and LAT. This lead to the formation of a supramolecular signalosome that recruits the phospholipase PLCG1, resulting in calcium mobilization and ERK activation, ultimately leading to T cell expansion and differentiation into effector cells. Gamma-delta TRs are produced through somatic rearrangement of a limited repertoire of variable (V), diversity (D), and joining (J) genes. The potential diversity of gamma-delta TRs is conferred by the unique ability to rearrange (D) genes in tandem and to utilize all three reading frames. The combinatorial diversity is considerably increased by the sequence exonuclease trimming and random nucleotide (N) region additions which occur during the V-(D)-J rearrangements. The protein is T cell receptor delta constant of Homo sapiens (Human).